A 637-amino-acid polypeptide reads, in one-letter code: Threonine--tRNA ligase (637 aa).

One can recognise a TGS domain in the interval 1-61 (MPNVKLPDGN…KEDCSLIIVT (61 aa)). The interval 242–533 (DHRKLGKALD…LIEHYAGKLP (292 aa)) is catalytic. Residues Cys-333, His-384, and His-510 each coordinate Zn(2+).

This sequence belongs to the class-II aminoacyl-tRNA synthetase family. Homodimer. Zn(2+) is required as a cofactor.

The protein localises to the cytoplasm. The catalysed reaction is tRNA(Thr) + L-threonine + ATP = L-threonyl-tRNA(Thr) + AMP + diphosphate + H(+). Catalyzes the attachment of threonine to tRNA(Thr) in a two-step reaction: L-threonine is first activated by ATP to form Thr-AMP and then transferred to the acceptor end of tRNA(Thr). Also edits incorrectly charged L-seryl-tRNA(Thr). The protein is Threonine--tRNA ligase of Legionella pneumophila (strain Paris).